Here is a 544-residue protein sequence, read N- to C-terminus: Chaperonin GroEL (544 aa).

Residues 29 to 32 (TLGP), 86 to 90 (DGTTT), Gly-413, 476 to 478 (NAA), and Asp-492 contribute to the ATP site.

This sequence belongs to the chaperonin (HSP60) family. In terms of assembly, forms a cylinder of 14 subunits composed of two heptameric rings stacked back-to-back. Interacts with the co-chaperonin GroES.

The protein resides in the cytoplasm. It catalyses the reaction ATP + H2O + a folded polypeptide = ADP + phosphate + an unfolded polypeptide.. Its function is as follows. Together with its co-chaperonin GroES, plays an essential role in assisting protein folding. The GroEL-GroES system forms a nano-cage that allows encapsulation of the non-native substrate proteins and provides a physical environment optimized to promote and accelerate protein folding. The polypeptide is Chaperonin GroEL (Bacillus pumilus (strain SAFR-032)).